A 36-amino-acid chain; its full sequence is Photosystem II reaction center protein M (36 aa).

A helical membrane pass occupies residues 5 to 25 (ILGLIATALFIIIPTSFLLIL).

The protein belongs to the PsbM family. PSII is composed of 1 copy each of membrane proteins PsbA, PsbB, PsbC, PsbD, PsbE, PsbF, PsbH, PsbI, PsbJ, PsbK, PsbL, PsbM, PsbT, PsbX, PsbY, PsbZ, Psb30/Ycf12, at least 3 peripheral proteins of the oxygen-evolving complex and a large number of cofactors. It forms dimeric complexes.

It is found in the plastid. The protein resides in the chloroplast thylakoid membrane. In terms of biological role, one of the components of the core complex of photosystem II (PSII). PSII is a light-driven water:plastoquinone oxidoreductase that uses light energy to abstract electrons from H(2)O, generating O(2) and a proton gradient subsequently used for ATP formation. It consists of a core antenna complex that captures photons, and an electron transfer chain that converts photonic excitation into a charge separation. This subunit is found at the monomer-monomer interface. This chain is Photosystem II reaction center protein M, found in Chlorokybus atmophyticus (Soil alga).